The sequence spans 417 residues: CinA-like protein (417 aa).

The protein belongs to the CinA family.

The chain is CinA-like protein from Gloeothece citriformis (strain PCC 7424) (Cyanothece sp. (strain PCC 7424)).